The chain runs to 288 residues: MSLSGRERPAWPGSRLSWLLCCSALLSPAAGYVIVSSVSWAVTNEVDEELDSASTEEALPALLEDSSSIWQQSFPASAHKEDTHLRPRGSARARPAPAARGMFSYRRESGSSEASPGPRVHAGTARSLAHASSWGCLATVSTHEKIQGLPFGSCLAISDGPVHNSTGIPFFYMTAKDPAVADLVKNPTASLVLPESEGEFCRKNIVDPEDPRCARLTLTGRMVTVPPGEVEFAKQAMFSRHPGMRKWPRQYEWFFMKMWVEHIWLQKWYGGVSDIPREEYFKAAPRKA.

Positions 1–31 (MSLSGRERPAWPGSRLSWLLCCSALLSPAAG) are cleaved as a signal peptide. The interval 78 to 100 (AHKEDTHLRPRGSARARPAPAAR) is disordered. Asparagine 164 is a glycosylation site (N-linked (GlcNAc...) asparagine).

The protein belongs to the CREG family. In terms of tissue distribution, brain specific.

It is found in the secreted. The polypeptide is Protein CREG2 (Creg2) (Mus musculus (Mouse)).